The sequence spans 133 residues: Egg protein CP422 (133 aa).

Residues 1–21 form the signal peptide; the sequence is MHECMIVFFIFAVVSIYYADA. Cystine bridges form between Cys107-Cys121, Cys114-Cys125, and Cys120-Cys130.

Its subcellular location is the secreted. In Schistosoma japonicum (Blood fluke), this protein is Egg protein CP422 (CP422).